The primary structure comprises 469 residues: Trigger factor (469 aa).

Positions 162–243 (GDFVSIDLSA…VKSVKERELP (82 aa)) constitute a PPIase FKBP-type domain. The disordered stretch occupies residues 438–469 (GPSGEQAAEDSAEESTDAAEGEAAEDADDTDK). Residues 444 to 469 (AAEDSAEESTDAAEGEAAEDADDTDK) are compositionally biased toward acidic residues.

The protein belongs to the FKBP-type PPIase family. Tig subfamily.

Its subcellular location is the cytoplasm. It catalyses the reaction [protein]-peptidylproline (omega=180) = [protein]-peptidylproline (omega=0). Functionally, involved in protein export. Acts as a chaperone by maintaining the newly synthesized protein in an open conformation. Functions as a peptidyl-prolyl cis-trans isomerase. This chain is Trigger factor, found in Mycolicibacterium smegmatis (strain ATCC 700084 / mc(2)155) (Mycobacterium smegmatis).